The primary structure comprises 557 residues: Urocanate hydratase (557 aa).

Residues 52 to 53 (GG), glutamine 130, 176 to 178 (GMG), glutamate 196, arginine 201, 242 to 243 (NA), 263 to 267 (QTSAH), 273 to 274 (YL), and tyrosine 322 each bind NAD(+). Residue cysteine 410 is part of the active site. Glycine 492 serves as a coordination point for NAD(+).

This sequence belongs to the urocanase family. NAD(+) is required as a cofactor.

It is found in the cytoplasm. It carries out the reaction 4-imidazolone-5-propanoate = trans-urocanate + H2O. The protein operates within amino-acid degradation; L-histidine degradation into L-glutamate; N-formimidoyl-L-glutamate from L-histidine: step 2/3. Functionally, catalyzes the conversion of urocanate to 4-imidazolone-5-propionate. The protein is Urocanate hydratase of Pseudoalteromonas translucida (strain TAC 125).